Here is a 360-residue protein sequence, read N- to C-terminus: Peptide chain release factor 1 (360 aa).

Position 237 is an N5-methylglutamine (glutamine 237).

Belongs to the prokaryotic/mitochondrial release factor family. Post-translationally, methylated by PrmC. Methylation increases the termination efficiency of RF1.

It is found in the cytoplasm. In terms of biological role, peptide chain release factor 1 directs the termination of translation in response to the peptide chain termination codons UAG and UAA. In Pseudomonas putida (strain W619), this protein is Peptide chain release factor 1.